A 61-amino-acid chain; its full sequence is Conotoxin Vn5.3 (61 aa).

Positions 1–19 (MHCLPVFVILLLLIASAPG) are cleaved as a signal peptide. The propeptide occupies 20–50 (VDVQPKTKNFMTRASLRDFAKKTPKRLSKLR).

Belongs to the conotoxin T superfamily. In terms of processing, contains 2 disulfide bonds that can be either 'C1-C3, C2-C4' or 'C1-C4, C2-C3', since these disulfide connectivities have been observed for conotoxins with cysteine framework V (for examples, see AC P0DQQ7 and AC P81755). As to expression, expressed by the venom duct.

It is found in the secreted. This is Conotoxin Vn5.3 from Conus ventricosus (Mediterranean cone).